Consider the following 375-residue polypeptide: Negative elongation factor E (375 aa).

Positions 7-36 (GLSEEEEALQKKFNKLKKKKKALLALKKQS) form a coiled coil. Residues 30 to 58 (LALKKQSSSGPASQGGVKRSLSEQPVVDT) are disordered. Serine 51 carries the post-translational modification Phosphoserine. Lysine 78 is covalently cross-linked (Glycyl lysine isopeptide (Lys-Gly) (interchain with G-Cter in SUMO1); alternate). Lysine 78 is covalently cross-linked (Glycyl lysine isopeptide (Lys-Gly) (interchain with G-Cter in SUMO2); alternate). The disordered stretch occupies residues 79-262 (AETKNSGFKR…SDSFPERRAP (184 aa)). Lysine 82 participates in a covalent cross-link: Glycyl lysine isopeptide (Lys-Gly) (interchain with G-Cter in SUMO2). The span at 90-101 (RTLEGKLKDPEK) shows a compositional bias: basic and acidic residues. Serine 113 and serine 115 each carry phosphoserine. A PolyADP-ribosyl glutamic acid modification is found at glutamate 122. A phosphoserine mark is found at serine 131 and serine 139. PolyADP-ribosyl glutamic acid is present on glutamate 151. Residues 155 to 167 (APGAGDGPPRGFD) are compositionally biased toward low complexity. Glutamate 172 carries the post-translational modification PolyADP-ribosyl glutamic acid. Phosphoserine occurs at positions 179, 181, 185, and 187. Repeat copies occupy residues 184-185 (RS), 186-187 (RS), 188-189 (RD), and 190-191 (RS). A 32 X 2 AA approximate tandem repeats of R-[DSE] region spans residues 184–247 (RSRSRDRSHD…RDRDRERDRE (64 aa)). Basic and acidic residues predominate over residues 186–260 (RSRDRSHDRS…RRSDSFPERR (75 aa)). Serine 191 carries the phosphoserine modification. One copy of the 5; approximate repeat lies at 192 to 193 (HD). A run of 4 repeats spans residues 194–195 (RS), 196–197 (RD), 198–199 (RD), and 200–201 (RD). Residues 202–203 (KE) form a 10; approximate repeat. Repeat copies occupy residues 204 to 205 (RD), 206 to 207 (RD), 208 to 209 (RD), 210 to 211 (RD), 212 to 213 (RD), 214 to 215 (RD), and 216 to 217 (RD). Residues 218 to 219 (KD) form an 18; approximate repeat. One copy of the 19; approximate repeat lies at 220–221 (KD). Tandem repeats lie at residues 222–223 (RD), 224–225 (RD), 226–227 (RD), and 228–229 (RD). One copy of the 24; approximate repeat lies at 230–231 (KE). A run of 8 repeats spans residues 232 to 233 (RD), 234 to 235 (RD), 236 to 237 (RD), 238 to 239 (RD), 240 to 241 (RD), 242 to 243 (RE), 244 to 245 (RD), and 246 to 247 (RE). Serine 253 and serine 255 each carry phosphoserine. Positions 266-336 (NTLYVYGEDM…VQLKVNIARK (71 aa)) constitute an RRM domain. Phosphothreonine occurs at positions 276 and 278. 2 positions are modified to phosphoserine: serine 285 and serine 357.

It belongs to the RRM NELF-E family. As to quaternary structure, the NELF complex is composed of NELFA, NELFB, NELFCD and NELFE. Interacts with NELFB. Post-translationally, phosphorylated by the P-TEFb complex at sites next to its RNA recognition motif, promoting its release from chromatin. Sumoylated. In terms of processing, poly-ADP-ribosylated by PARP1, thereby preventing RNA-binding and relieving transcription pausing.

Its subcellular location is the nucleus. The protein localises to the chromosome. Its function is as follows. Essential component of the NELF complex, a complex that negatively regulates the elongation of transcription by RNA polymerase II. The NELF complex, which acts via an association with the DSIF complex and causes transcriptional pausing, is counteracted by the P-TEFb kinase complex. Provides the strongest RNA binding activity of the NELF complex and may initially recruit the NELF complex to RNA. The protein is Negative elongation factor E (Nelfe) of Mus musculus (Mouse).